Consider the following 92-residue polypeptide: Gene 80 protein (92 aa).

This chain is Gene 80 protein (80), found in Mycobacterium phage L5 (Mycobacteriophage L5).